Consider the following 119-residue polypeptide: Large ribosomal subunit protein uL24 (119 aa).

This sequence belongs to the universal ribosomal protein uL24 family. Part of the 50S ribosomal subunit.

In terms of biological role, one of two assembly initiator proteins, it binds directly to the 5'-end of the 23S rRNA, where it nucleates assembly of the 50S subunit. Its function is as follows. One of the proteins that surrounds the polypeptide exit tunnel on the outside of the subunit. This Arthrobacter sp. (strain FB24) protein is Large ribosomal subunit protein uL24.